Here is a 373-residue protein sequence, read N- to C-terminus: Autophagy-related protein 18 (373 aa).

Residues 142 to 163 (YPDSRDHEPRTEGESSSPNVSN) are disordered. Residues 144-154 (DSRDHEPRTEG) show a composition bias toward basic and acidic residues. WD repeat units lie at residues 144 to 183 (DSRD…QITK), 186 to 226 (AHKD…RLYQ), and 231 to 270 (SLPA…SNLE). The L/FRRG motif motif lies at 227-231 (FRRGS).

This sequence belongs to the WD repeat PROPPIN family. Component of the PI(3,5)P2 regulatory complex. Interacts with atg5.

It is found in the preautophagosomal structure membrane. Its subcellular location is the vacuole membrane. The protein resides in the endosome membrane. In terms of biological role, the PI(3,5)P2 regulatory complex regulates both the synthesis and turnover of phosphatidylinositol 3,5-bisphosphate (PtdIns(3,5)P2). Necessary for proper vacuole morphology. Plays an important role in osmotically-induced vacuole fragmentation. Required for cytoplasm to vacuole transport (Cvt) vesicle formation, pexophagy and starvation-induced autophagy. Involved in correct atg9 trafficking to the preautophagosomal structure. Might also be involved in premeiotic DNA replication. Required for the recruitment of the atg5-atg12/atg16 complex to the preautophagosomal structure. The protein is Autophagy-related protein 18 (atg18) of Schizosaccharomyces pombe (strain 972 / ATCC 24843) (Fission yeast).